Here is a 371-residue protein sequence, read N- to C-terminus: uncharacterized protein (371 aa).

This sequence to A.pernix APE_1804 and S.solfataricus SSO2105.

This is an uncharacterized protein from Aeropyrum pernix (strain ATCC 700893 / DSM 11879 / JCM 9820 / NBRC 100138 / K1).